The primary structure comprises 225 residues: N-(5'-phosphoribosyl)anthranilate isomerase (225 aa).

The protein belongs to the TrpF family.

It catalyses the reaction N-(5-phospho-beta-D-ribosyl)anthranilate = 1-(2-carboxyphenylamino)-1-deoxy-D-ribulose 5-phosphate. It functions in the pathway amino-acid biosynthesis; L-tryptophan biosynthesis; L-tryptophan from chorismate: step 3/5. The polypeptide is N-(5'-phosphoribosyl)anthranilate isomerase (Nitrobacter hamburgensis (strain DSM 10229 / NCIMB 13809 / X14)).